Reading from the N-terminus, the 463-residue chain is 3-phosphoshikimate 1-carboxyvinyltransferase (463 aa).

3 residues coordinate 3-phosphoshikimate: Lys-26, Ser-27, and Arg-31. Phosphoenolpyruvate is bound at residue Lys-26. Phosphoenolpyruvate-binding residues include Gly-99 and Arg-127. Residues Ser-163, Ser-164, Gln-165, Ser-188, Asp-300, and Lys-327 each contribute to the 3-phosphoshikimate site. Residue Gln-165 participates in phosphoenolpyruvate binding. The active-site Proton acceptor is the Asp-300. Arg-331 and Arg-372 together coordinate phosphoenolpyruvate.

The protein belongs to the EPSP synthase family. As to quaternary structure, monomer.

Its subcellular location is the cytoplasm. It catalyses the reaction 3-phosphoshikimate + phosphoenolpyruvate = 5-O-(1-carboxyvinyl)-3-phosphoshikimate + phosphate. It participates in metabolic intermediate biosynthesis; chorismate biosynthesis; chorismate from D-erythrose 4-phosphate and phosphoenolpyruvate: step 6/7. Catalyzes the transfer of the enolpyruvyl moiety of phosphoenolpyruvate (PEP) to the 5-hydroxyl of shikimate-3-phosphate (S3P) to produce enolpyruvyl shikimate-3-phosphate and inorganic phosphate. The polypeptide is 3-phosphoshikimate 1-carboxyvinyltransferase (Burkholderia pseudomallei (Pseudomonas pseudomallei)).